The following is a 114-amino-acid chain: Integration host factor subunit alpha (114 aa).

Belongs to the bacterial histone-like protein family. Heterodimer of an alpha and a beta chain.

This protein is one of the two subunits of integration host factor, a specific DNA-binding protein that functions in genetic recombination as well as in transcriptional and translational control. This Afipia carboxidovorans (strain ATCC 49405 / DSM 1227 / KCTC 32145 / OM5) (Oligotropha carboxidovorans) protein is Integration host factor subunit alpha.